The primary structure comprises 299 residues: Taste receptor type 2 member 1 (299 aa).

Residues 1-9 (MLESHLIIY) are Extracellular-facing. Residues 10–30 (FLLAVIQFLLGIFTNGIIVVV) form a helical membrane-spanning segment. At 31–55 (NGIDLIKHRKMAPLDLLLSCLAVSR) the chain is on the cytoplasmic side. The chain crosses the membrane as a helical span at residues 56-76 (IFLQLFIFYVNVIVIFFIEFI). Residues 77–81 (MCSAN) lie on the Extracellular side of the membrane. Residues 82 to 102 (CAILLFINELELWLATWLGVF) form a helical membrane-spanning segment. Topologically, residues 103–124 (YCAKVASVRHPLFXWLKMRISK) are cytoplasmic. Residues 125–145 (LVPWMILGSLLYVSMICVFHS) form a helical membrane-spanning segment. Topologically, residues 146 to 178 (KYAGFMVPYFLRNFFSQNTTIQKEDTLAIQIFS) are extracellular. An N-linked (GlcNAc...) asparagine glycan is attached at asparagine 163. Residues 179-199 (FVAEFSVPLLIFLVAVLLLIF) form a helical membrane-spanning segment. Residues 200–222 (SLGRHTRQMRNTVAGSRVPGRGA) lie on the Cytoplasmic side of the membrane. Residues 223–243 (PISALLSILSFLILYFSHCMI) form a helical membrane-spanning segment. Residues 244–257 (KVFLSSLKFHIRRF) lie on the Extracellular side of the membrane. A helical membrane pass occupies residues 258–278 (IFLFFILVIGIYPSGHSLILI). Residues 279–299 (LGNPKLKQNAKKFLLHSKCCQ) lie on the Cytoplasmic side of the membrane.

It belongs to the G-protein coupled receptor T2R family.

It is found in the membrane. Its function is as follows. Receptor that may play a role in the perception of bitterness and is gustducin-linked. May play a role in sensing the chemical composition of the gastrointestinal content. The activity of this receptor may stimulate alpha gustducin, mediate PLC-beta-2 activation and lead to the gating of TRPM5. The protein is Taste receptor type 2 member 1 (TAS2R1) of Gorilla gorilla gorilla (Western lowland gorilla).